We begin with the raw amino-acid sequence, 230 residues long: V-type proton ATPase subunit E (230 aa).

This sequence belongs to the V-ATPase E subunit family. V-ATPase is a heteromultimeric enzyme composed of a peripheral catalytic V1 complex (components A to H) attached to an integral membrane V0 proton pore complex (components: a, c, c', c'' and d).

Functionally, subunit of the peripheral V1 complex of vacuolar ATPase essential for assembly or catalytic function. V-ATPase is responsible for acidifying a variety of intracellular compartments in eukaryotic cells. The sequence is that of V-type proton ATPase subunit E (VATE) from Citrus limon (Lemon).